The sequence spans 112 residues: Cell cycle protein GpsB (112 aa).

A coiled-coil region spans residues 42–77 (YQKMADMNNEVVKLSEENHKLKKELEELRLRVATSR). The disordered stretch occupies residues 74–96 (ATSRPQDNKNFSSNNSSSASNNV). Low complexity predominate over residues 81-95 (NKNFSSNNSSSASNN).

The protein belongs to the GpsB family. Forms polymers through the coiled coil domains. Interacts with PBP1, MreC and EzrA.

The protein localises to the cytoplasm. Divisome component that associates with the complex late in its assembly, after the Z-ring is formed, and is dependent on DivIC and PBP2B for its recruitment to the divisome. Together with EzrA, is a key component of the system that regulates PBP1 localization during cell cycle progression. Its main role could be the removal of PBP1 from the cell pole after pole maturation is completed. Also contributes to the recruitment of PBP1 to the division complex. Not essential for septum formation. This is Cell cycle protein GpsB from Staphylococcus epidermidis (strain ATCC 12228 / FDA PCI 1200).